The chain runs to 529 residues: ATP synthase F(1) complex subunit beta, mitochondrial (529 aa).

The N-terminal 47 residues, 1–47 (MLGFVGRVAAAPASGALRRLTPSASLPPAQLLLRAAPTAVHPVRDYA), are a transit peptide targeting the mitochondrion. The O-linked (GlcNAc) serine glycan is linked to Ser106. 3 positions are modified to N6-acetyllysine; alternate: Lys124, Lys133, and Lys161. 3 positions are modified to N6-succinyllysine; alternate: Lys124, Lys133, and Lys161. N6-acetyllysine is present on Lys198. Positions 209, 210, 211, 212, 213, and 214 each coordinate ADP. Position 209 (Gly209) interacts with ATP. 5 residues coordinate phosphate: Gly209, Val210, Gly211, Lys212, and Thr213. ATP-binding residues include Gly211, Lys212, Thr213, and Val214. Thr213 contacts Mg(2+). Glu238 is a binding site for Mg(2+). ATP is bound at residue Arg239. An N6-acetyllysine; alternate mark is found at Lys259 and Lys264. 2 positions are modified to N6-succinyllysine; alternate: Lys259 and Lys264. Residue Thr312 is modified to Phosphothreonine. Ser415 carries the post-translational modification Phosphoserine. Lys426 is modified (N6-acetyllysine). Ser433 carries the post-translational modification Phosphoserine. An N6-acetyllysine mark is found at Lys480 and Lys485. Position 522 is an N6-acetyllysine; alternate (Lys522). Residue Lys522 is modified to N6-succinyllysine; alternate. A Phosphoserine modification is found at Ser529.

The protein belongs to the ATPase alpha/beta chains family. Homotrimer. Component of the ATP synthase complex composed at least of ATP5F1A/subunit alpha, ATP5F1B/subunit beta, ATP5MC1/subunit c (homooctomer), MT-ATP6/subunit a, MT-ATP8/subunit 8, ATP5ME/subunit e, ATP5MF/subunit f, ATP5MG/subunit g, ATP5MK/subunit k, ATP5MJ/subunit j, ATP5F1C/subunit gamma, ATP5F1D/subunit delta, ATP5F1E/subunit epsilon, ATP5PF/subunit F6, ATP5PB/subunit b, ATP5PD/subunit d, ATP5PO/subunit OSCP. ATP synthase complex consists of a soluble F(1) head domain (subunits alpha(3) and beta(3)) - the catalytic core - and a membrane F(0) domain - the membrane proton channel (subunits c, a, 8, e, f, g, k and j). These two domains are linked by a central stalk (subunits gamma, delta, and epsilon) rotating inside the F1 region and a stationary peripheral stalk (subunits F6, b, d, and OSCP). Interacts with PPIF. Interacts with BCL2L1 isoform BCL-X(L); the interaction mediates the association of BCL2L1 isoform BCL-X(L) with the mitochondrial membrane F(1)F(0) ATP synthase and enhances neurons metabolic efficiency. Interacts with CLN5 and PPT1. Interacts with S100A1; this interaction increases F1-ATPase activity. Interacts with MTLN. Interacts with TTC5/STRAP; the interaction results in decreased mitochondrial ATP production. Requires Mg(2+) as cofactor.

It is found in the mitochondrion inner membrane. It catalyses the reaction ATP + H2O + 4 H(+)(in) = ADP + phosphate + 5 H(+)(out). In terms of biological role, catalytic subunit beta, of the mitochondrial membrane ATP synthase complex (F(1)F(0) ATP synthase or Complex V) that produces ATP from ADP in the presence of a proton gradient across the membrane which is generated by electron transport complexes of the respiratory chain. ATP synthase complex consist of a soluble F(1) head domain - the catalytic core - and a membrane F(1) domain - the membrane proton channel. These two domains are linked by a central stalk rotating inside the F(1) region and a stationary peripheral stalk. During catalysis, ATP synthesis in the catalytic domain of F(1) is coupled via a rotary mechanism of the central stalk subunits to proton translocation. In vivo, can only synthesize ATP although its ATP hydrolase activity can be activated artificially in vitro. With the subunit alpha (ATP5F1A), forms the catalytic core in the F(1) domain. This is ATP synthase F(1) complex subunit beta, mitochondrial from Homo sapiens (Human).